Here is a 318-residue protein sequence, read N- to C-terminus: Geranylfarnesyl diphosphate synthase (318 aa).

The isopentenyl diphosphate site is built by lysine 31, arginine 34, and histidine 65. 2 residues coordinate Mg(2+): aspartate 72 and aspartate 76. Arginine 81 provides a ligand contact to an all-trans-polyprenyl diphosphate. Arginine 82 lines the isopentenyl diphosphate pocket. Residues lysine 166, threonine 167, and glutamine 204 each coordinate an all-trans-polyprenyl diphosphate.

The protein belongs to the FPP/GGPP synthase family. Homodimer. Requires Mg(2+) as cofactor.

It carries out the reaction isopentenyl diphosphate + (2E,6E,10E)-geranylgeranyl diphosphate = (2E,6E,10E,14E)-geranylfarnesyl diphosphate + diphosphate. Probably involved in biosynthesis of the precursor for C25 (sesterterpanyl chain) moiety of C25-C25 diether (2,3-di-O-sesterterpanyl-sn-glycero) membrane lipid. Catalyzes the condensation of isopentenyl pyrophosphate with the allylic pyrophosphates to yield all-trans geranylfarnesyl diphosphate (GFPP). Geranylgeranyl diphosphate (GGPP) is the preferred substrate, however methylallyl diphosphate (DMAPP), farnesyl diphosphate (FPP) and geranyl diphosphate (GPP) can also be used as allylic substrate. The chain is Geranylfarnesyl diphosphate synthase (fgs) from Aeropyrum pernix.